We begin with the raw amino-acid sequence, 450 residues long: MESTEKQKVSMVSLGCSKNLVDAEVMLGLLARQEYEITTDEREADIIIVNTCSFIKEAKQESIDAILDLAERKNDGRCHTLIVSGCLPQRYQEELARELPEVDIFIGTGDYPRIAEILAEKSGTDEQLCYIGDPDFVFDETLPRLNSSPAWFSYLKIGEGCSNRCSYCIIPKLRGPYRSRPLEALVAEAEQLASRGVKELNIISQDITRYGSDMEDGTTLETLLRRLVQIDGIQWIRLLYAYPDGISDALIALIRDEPKICKYLDIPLQHISDPVLKLMRRRSNEQQIRELLAKLRREIPTLALRTSLIVGFPGETMEDFTSLMQFVEQARFDRLGVFCYSREEGTPAATMPDQVSERVKRERHRKLMRIQARLSFKRNRELIGTTEQVIVEGYSEETELLLKGRSSRQAPDIDGQVYITAGTADVGDIVALRITDSSDYDLIGEIQERT.

Residues 7-123 (QKVSMVSLGC…IAEILAEKSG (117 aa)) enclose the MTTase N-terminal domain. 6 residues coordinate [4Fe-4S] cluster: Cys16, Cys52, Cys86, Cys161, Cys165, and Cys168. The region spanning 147–377 (SSPAWFSYLK…MRIQARLSFK (231 aa)) is the Radical SAM core domain. The 69-residue stretch at 380–448 (RELIGTTEQV…DYDLIGEIQE (69 aa)) folds into the TRAM domain.

This sequence belongs to the methylthiotransferase family. RimO subfamily. The cofactor is [4Fe-4S] cluster.

The protein resides in the cytoplasm. It carries out the reaction L-aspartate(89)-[ribosomal protein uS12]-hydrogen + (sulfur carrier)-SH + AH2 + 2 S-adenosyl-L-methionine = 3-methylsulfanyl-L-aspartate(89)-[ribosomal protein uS12]-hydrogen + (sulfur carrier)-H + 5'-deoxyadenosine + L-methionine + A + S-adenosyl-L-homocysteine + 2 H(+). Catalyzes the methylthiolation of an aspartic acid residue of ribosomal protein uS12. The chain is Ribosomal protein uS12 methylthiotransferase RimO from Pelobacter propionicus (strain DSM 2379 / NBRC 103807 / OttBd1).